We begin with the raw amino-acid sequence, 245 residues long: Polyhedrin (245 aa).

The interval 32 to 35 is nuclear localization signal; sequence KRKK.

Belongs to the polyhedrin family.

It is found in the host nucleus. Major component of the virus occlusion bodies which are large proteinaceous structures termed polyhedra. These structures serve as the protective package for the virus particles outside the infected host and allow natural transmission of virus between insect hosts, assisting persistence in the environment. Forms the paracrystalline lattice of polyhedra and interacts with enveloped virions as well as other accessory molecules and structures to form a mature viral occlusion body. The protein is Polyhedrin (PH) of Lepidoptera (butterflies and moths).